The following is a 629-amino-acid chain: tRNA uridine 5-carboxymethylaminomethyl modification enzyme MnmG (629 aa).

FAD contacts are provided by residues 15 to 20 (GAGHAG), Val127, and Ser182. The disordered stretch occupies residues 203–226 (TPPRVKSSTIDYSKTEEQPGDDHP). A compositionally biased stretch (basic and acidic residues) spans 215 to 226 (SKTEEQPGDDHP). 274–288 (GARYCPSIEDKIVRF) lines the NAD(+) pocket. Gln371 provides a ligand contact to FAD.

The protein belongs to the MnmG family. Homodimer. Heterotetramer of two MnmE and two MnmG subunits. Requires FAD as cofactor.

It is found in the cytoplasm. In terms of biological role, NAD-binding protein involved in the addition of a carboxymethylaminomethyl (cmnm) group at the wobble position (U34) of certain tRNAs, forming tRNA-cmnm(5)s(2)U34. The protein is tRNA uridine 5-carboxymethylaminomethyl modification enzyme MnmG of Listeria monocytogenes serovar 1/2a (strain ATCC BAA-679 / EGD-e).